A 217-amino-acid polypeptide reads, in one-letter code: Cytidylate kinase (217 aa).

ATP is bound at residue 10-18 (GPAGAGKST).

This sequence belongs to the cytidylate kinase family. Type 1 subfamily.

The protein localises to the cytoplasm. The catalysed reaction is CMP + ATP = CDP + ADP. The enzyme catalyses dCMP + ATP = dCDP + ADP. In Clostridium botulinum (strain Loch Maree / Type A3), this protein is Cytidylate kinase.